Reading from the N-terminus, the 205-residue chain is uncharacterized protein (205 aa).

The signal sequence occupies residues 1-18; sequence MKASLALLSLLTAFTSHS.

This is an uncharacterized protein from Escherichia coli (strain K12).